The primary structure comprises 372 residues: Enoyl-[acyl-carrier-protein] reductase, mitochondrial (372 aa).

Residues 1-18 (MSFFKTAVRRFSSTSITR) constitute a mitochondrion transit peptide. The active-site Proton donor is Tyr72. Residues Asn157, 183–186 (NSMV), 206–208 (RNR), 279–282 (FGGM), 304–306 (FWV), and Lys365 contribute to the NADP(+) site.

The protein belongs to the zinc-containing alcohol dehydrogenase family. Quinone oxidoreductase subfamily. In terms of assembly, homodimer.

It is found in the mitochondrion matrix. The enzyme catalyses a 2,3-saturated acyl-[ACP] + NADP(+) = a (2E)-enoyl-[ACP] + NADPH + H(+). In terms of biological role, catalyzes the NADPH-dependent reduction of trans-2-enoyl thioesters in mitochondrial fatty acid synthesis (fatty acid synthesis type II). Fatty acid chain elongation in mitochondria uses acyl carrier protein (ACP) as an acyl group carrier, but the enzyme accepts both ACP and CoA thioesters as substrates in vitro. Required for respiration and the maintenance of the mitochondrial compartment. In Schizosaccharomyces pombe (strain 972 / ATCC 24843) (Fission yeast), this protein is Enoyl-[acyl-carrier-protein] reductase, mitochondrial (etr1).